Here is a 178-residue protein sequence, read N- to C-terminus: Cytochrome b6-f complex iron-sulfur subunit (178 aa).

The helical transmembrane segment at 20–42 (LLTFGTATGVALGALYPVANYFM) threads the bilayer. The Rieske domain maps to 71–161 (NHPAGDRSLV…IDVEDDKVFV (91 aa)). [2Fe-2S] cluster contacts are provided by Cys107, His109, Cys125, and His128. Residues Cys112 and Cys127 are joined by a disulfide bond.

It belongs to the Rieske iron-sulfur protein family. As to quaternary structure, the 4 large subunits of the cytochrome b6-f complex are cytochrome b6, subunit IV (17 kDa polypeptide, PetD), cytochrome f and the Rieske protein, while the 4 small subunits are PetG, PetL, PetM and PetN. The complex functions as a dimer. It depends on [2Fe-2S] cluster as a cofactor.

It localises to the cellular thylakoid membrane. The enzyme catalyses 2 oxidized [plastocyanin] + a plastoquinol + 2 H(+)(in) = 2 reduced [plastocyanin] + a plastoquinone + 4 H(+)(out). In terms of biological role, component of the cytochrome b6-f complex, which mediates electron transfer between photosystem II (PSII) and photosystem I (PSI), cyclic electron flow around PSI, and state transitions. The sequence is that of Cytochrome b6-f complex iron-sulfur subunit from Prochlorococcus marinus (strain MIT 9211).